The chain runs to 458 residues: ATP synthase subunit beta (458 aa).

G148–T155 contributes to the ATP binding site.

This sequence belongs to the ATPase alpha/beta chains family. As to quaternary structure, F-type ATPases have 2 components, CF(1) - the catalytic core - and CF(0) - the membrane proton channel. CF(1) has five subunits: alpha(3), beta(3), gamma(1), delta(1), epsilon(1). CF(0) has three main subunits: a(1), b(2) and c(9-12). The alpha and beta chains form an alternating ring which encloses part of the gamma chain. CF(1) is attached to CF(0) by a central stalk formed by the gamma and epsilon chains, while a peripheral stalk is formed by the delta and b chains.

The protein resides in the cell inner membrane. It carries out the reaction ATP + H2O + 4 H(+)(in) = ADP + phosphate + 5 H(+)(out). In terms of biological role, produces ATP from ADP in the presence of a proton gradient across the membrane. The catalytic sites are hosted primarily by the beta subunits. This chain is ATP synthase subunit beta, found in Shewanella woodyi (strain ATCC 51908 / MS32).